The primary structure comprises 221 residues: Eukaryotic translation initiation factor NCBP (221 aa).

It belongs to the eukaryotic initiation factor 4E family. In terms of assembly, EIF4F is a multi-subunit complex, the composition of which varies with external and internal environmental conditions. It is composed of at least EIF4A, EIF4E and EIF4G. EIF4E is also known to interact with other partners. In higher plants two isoforms of EIF4F have been identified, named isoform EIF4F and isoform EIF(iso)4F. Isoform EIF4F has subunits p220 and p26, whereas isoform EIF(iso)4F has subunits p82 and p28.

In terms of biological role, recognizes and binds the 7-methylguanosine-containing mRNA cap during an early step in the initiation of protein synthesis and facilitates ribosome binding by inducing the unwinding of the mRNAs secondary structures. The polypeptide is Eukaryotic translation initiation factor NCBP (NCBP) (Arabidopsis thaliana (Mouse-ear cress)).